The chain runs to 221 residues: MRLILLGAPGAGKGTQANFIKEKFGIPQISTGDMLRAAVKAGTPLGLEAKRYMDAGELVTDELIINLVKERLQDSDCANGYLFDGFPRTIPQAEAMKQAGVAIDYVLEIDVPFDEIITRMSGRRMHPASGRTYHVKFNPPKVEGVDDVTGEPLIQRDDDKEETVKKRLDVYVSQTKPLIDYYNNWAQKGDPSTSLAAPQYRRISGLGSVDEIRARVFDALK.

10 to 15 (GAGKGT) contacts ATP. Positions 30–59 (STGDMLRAAVKAGTPLGLEAKRYMDAGELV) are NMP. AMP-binding positions include threonine 31, arginine 36, 57-59 (ELV), 85-88 (GFPR), and glutamine 92. An LID region spans residues 122-159 (GRRMHPASGRTYHVKFNPPKVEGVDDVTGEPLIQRDDD). ATP is bound by residues arginine 123 and 132 to 133 (TY). AMP-binding residues include arginine 156 and arginine 167. Glycine 207 lines the ATP pocket.

This sequence belongs to the adenylate kinase family. In terms of assembly, monomer.

Its subcellular location is the cytoplasm. The catalysed reaction is AMP + ATP = 2 ADP. Its pathway is purine metabolism; AMP biosynthesis via salvage pathway; AMP from ADP: step 1/1. Its function is as follows. Catalyzes the reversible transfer of the terminal phosphate group between ATP and AMP. Plays an important role in cellular energy homeostasis and in adenine nucleotide metabolism. This chain is Adenylate kinase, found in Paraburkholderia phymatum (strain DSM 17167 / CIP 108236 / LMG 21445 / STM815) (Burkholderia phymatum).